The sequence spans 251 residues: Triosephosphate isomerase (251 aa).

9 to 11 (NWK) serves as a coordination point for substrate. His95 serves as the catalytic Electrophile. Residue Glu167 is the Proton acceptor of the active site. Substrate-binding positions include Gly173, Ser213, and 234–235 (GG).

This sequence belongs to the triosephosphate isomerase family. In terms of assembly, homodimer.

The protein localises to the cytoplasm. The enzyme catalyses D-glyceraldehyde 3-phosphate = dihydroxyacetone phosphate. It functions in the pathway carbohydrate biosynthesis; gluconeogenesis. The protein operates within carbohydrate degradation; glycolysis; D-glyceraldehyde 3-phosphate from glycerone phosphate: step 1/1. Functionally, involved in the gluconeogenesis. Catalyzes stereospecifically the conversion of dihydroxyacetone phosphate (DHAP) to D-glyceraldehyde-3-phosphate (G3P). In Fusobacterium nucleatum subsp. nucleatum (strain ATCC 25586 / DSM 15643 / BCRC 10681 / CIP 101130 / JCM 8532 / KCTC 2640 / LMG 13131 / VPI 4355), this protein is Triosephosphate isomerase.